A 108-amino-acid chain; its full sequence is MLGKKLHVKKNDTVVVIAGKDKAKTGKVLQILPKKDGILVEGVNITKRHTKPRGSESGSIVEKEAVIHVSNVMIYCSKCDKAVRTRTNTLEDGKKVRVCVKCGEAFDK.

This sequence belongs to the universal ribosomal protein uL24 family. Part of the 50S ribosomal subunit.

In terms of biological role, one of two assembly initiator proteins, it binds directly to the 5'-end of the 23S rRNA, where it nucleates assembly of the 50S subunit. Its function is as follows. One of the proteins that surrounds the polypeptide exit tunnel on the outside of the subunit. The polypeptide is Large ribosomal subunit protein uL24 (Geotalea daltonii (strain DSM 22248 / JCM 15807 / FRC-32) (Geobacter daltonii)).